The sequence spans 98 residues: MEIKPLGDRVLLKPMEEEEKTKSGIVIPDTAKEKPQKGKVLAVGTGRTLDNGTRVPLEVQVGDIVVFSKYAGTEVKVDGEEYLIVSERDILAVVGHEN.

Belongs to the GroES chaperonin family. In terms of assembly, heptamer of 7 subunits arranged in a ring. Interacts with the chaperonin GroEL.

The protein localises to the cytoplasm. Functionally, together with the chaperonin GroEL, plays an essential role in assisting protein folding. The GroEL-GroES system forms a nano-cage that allows encapsulation of the non-native substrate proteins and provides a physical environment optimized to promote and accelerate protein folding. GroES binds to the apical surface of the GroEL ring, thereby capping the opening of the GroEL channel. The protein is Co-chaperonin GroES of Coprothermobacter proteolyticus (strain ATCC 35245 / DSM 5265 / OCM 4 / BT).